Reading from the N-terminus, the 431-residue chain is Enolase (431 aa).

Glutamine 166 contributes to the (2R)-2-phosphoglycerate binding site. The active-site Proton donor is glutamate 208. Mg(2+) is bound by residues aspartate 245, glutamate 288, and aspartate 315. (2R)-2-phosphoglycerate-binding residues include lysine 340, arginine 369, serine 370, and lysine 391. Residue lysine 340 is the Proton acceptor of the active site.

This sequence belongs to the enolase family. Requires Mg(2+) as cofactor.

Its subcellular location is the cytoplasm. The protein resides in the secreted. The protein localises to the cell surface. The catalysed reaction is (2R)-2-phosphoglycerate = phosphoenolpyruvate + H2O. It functions in the pathway carbohydrate degradation; glycolysis; pyruvate from D-glyceraldehyde 3-phosphate: step 4/5. Functionally, catalyzes the reversible conversion of 2-phosphoglycerate (2-PG) into phosphoenolpyruvate (PEP). It is essential for the degradation of carbohydrates via glycolysis. This Clostridium botulinum (strain Okra / Type B1) protein is Enolase.